Consider the following 576-residue polypeptide: Adenine deaminase (576 aa).

This sequence belongs to the metallo-dependent hydrolases superfamily. Adenine deaminase family. It depends on Mn(2+) as a cofactor.

It carries out the reaction adenine + H2O + H(+) = hypoxanthine + NH4(+). In Syntrophobacter fumaroxidans (strain DSM 10017 / MPOB), this protein is Adenine deaminase.